The primary structure comprises 660 residues: Genome-linked protein precursor (660 aa).

A signal peptide spans 1–25 (MALLGIKLMTLVFAAWLSCCHSSSA). Transmembrane regions (helical) follow at residues 131-151 (AVGM…LVVY) and 165-185 (AVCV…ISWI). The Peptidase S39 domain maps to 224–416 (VEGYKPFIIP…GLTSPDFKFE (193 aa)). Residues H272, D304, and S373 each act as for protease activity in the active site. 2 disordered regions span residues 463–490 (EEES…GCPP) and 595–660 (TKAP…AWVR).

This sequence belongs to the peptidase S39B family.

The protein resides in the host membrane. In terms of biological role, precursor from which the VPg molecule is probably released at the onset of the RNA synthesis. Essential for virus replication. The chain is Genome-linked protein precursor from Euphorbia pulcherrima (Poinsettia).